Consider the following 309-residue polypeptide: Taste receptor type 2 member 113 (309 aa).

Over 1–10 the chain is Extracellular; that stretch reads MVAVLQSTLP. Residues 11 to 31 traverse the membrane as a helical segment; the sequence is IIFSMEFIMGTLGNGFIFLIV. The Cytoplasmic portion of the chain corresponds to 32–55; that stretch reads CIDWVQRRKISLVDQIRTALAISR. A helical membrane pass occupies residues 56–76; it reads IALIWLIFLDWWVSVHYPALH. Residues 77–80 are Extracellular-facing; the sequence is ETGK. The helical transmembrane segment at 81–101 threads the bilayer; the sequence is MLSTYLISWTVINHCNFWLTA. The Cytoplasmic segment spans residues 102 to 127; that stretch reads NLSILYFLKIANFSNIIFLYLKFRSK. The chain crosses the membrane as a helical span at residues 128-148; the sequence is NVVLVTLLVSLFFLFLNTVII. Over 149–185 the chain is Extracellular; that stretch reads KIFSDVCFDSVQRNVSQIFIMYNHEQICKFLSFTNPM. Asn-162 carries N-linked (GlcNAc...) asparagine glycosylation. A helical transmembrane segment spans residues 186–206; sequence FTFIPFVMSTVMFSLLIFSLW. Topologically, residues 207 to 229 are cytoplasmic; that stretch reads RHLKNMQHTAKGCRDISTTVHIR. A helical transmembrane segment spans residues 230 to 250; it reads ALQTIIVSVVLYTIFFLSFFV. Topologically, residues 251-262 are extracellular; it reads KVWSFVSPERYL. The chain crosses the membrane as a helical span at residues 263-283; it reads IFLFVWALGNAVFSAHPFVMI. Over 284 to 309 the chain is Cytoplasmic; that stretch reads LVNRRLRLASLSLIFWLWYRFKNIEV.

It belongs to the G-protein coupled receptor T2R family.

It localises to the membrane. Its function is as follows. Putative taste receptor which may play a role in the perception of bitterness. This chain is Taste receptor type 2 member 113, found in Mus musculus (Mouse).